A 494-amino-acid polypeptide reads, in one-letter code: Sugar phosphate exchanger 3 (494 aa).

A helical membrane pass occupies residues 10-30; the sequence is GALLTSFSHHHLAVFLLTFFS. N-linked (GlcNAc...) asparagine glycosylation occurs at asparagine 58. A run of 5 helical transmembrane segments spans residues 81–101, 113–133, 146–166, 177–197, and 209–229; these read TLFL…GLFI, WVLS…GTLT, GLWI…VAVM, VVFG…AFLA, and FLVT…GLLV. A disordered region spans residues 240–261; it reads GAEESSEEDSQRPLIDGAENED. The next 6 membrane-spanning stretches (helical) occupy residues 297–317, 333–353, 357–377, 386–406, 428–448, and 457–477; these read LAYA…PFYL, IWYD…SDVL, APVL…YSRS, LLMT…SSAI, GIVD…VSLI, and VFYF…PLIV.

This sequence belongs to the major facilitator superfamily. Organophosphate:Pi antiporter (OPA) (TC 2.A.1.4) family. In terms of assembly, interacts with ATRAID; the interaction is direct and both proteins are mutually dependent for their stability. Post-translationally, glycosylated.

Its subcellular location is the endoplasmic reticulum membrane. The protein resides in the lysosome membrane. Unlike the other SLC37 members, lacks glucose-6-phosphate antiporter activity. In osteoclasts, forms a transporter complex with ATRAID for nitrogen-containing-bisphophonates (N-BPs) required for releasing N-BP molecules that have trafficked to lysosomes through fluid-phase endocytosis into the cytosol. This chain is Sugar phosphate exchanger 3 (Slc37a3), found in Mus musculus (Mouse).